A 104-amino-acid chain; its full sequence is Large ribosomal subunit protein bL21 (104 aa).

The protein belongs to the bacterial ribosomal protein bL21 family. In terms of assembly, part of the 50S ribosomal subunit. Contacts protein L20.

Functionally, this protein binds to 23S rRNA in the presence of protein L20. This Agrobacterium fabrum (strain C58 / ATCC 33970) (Agrobacterium tumefaciens (strain C58)) protein is Large ribosomal subunit protein bL21.